A 441-amino-acid chain; its full sequence is Methylenetetrahydrofolate--tRNA-(uracil-5-)-methyltransferase TrmFO (441 aa).

FAD is bound at residue 10–15 (GAGLAG).

It belongs to the MnmG family. TrmFO subfamily. FAD is required as a cofactor.

The protein resides in the cytoplasm. It carries out the reaction uridine(54) in tRNA + (6R)-5,10-methylene-5,6,7,8-tetrahydrofolate + NADH + H(+) = 5-methyluridine(54) in tRNA + (6S)-5,6,7,8-tetrahydrofolate + NAD(+). The catalysed reaction is uridine(54) in tRNA + (6R)-5,10-methylene-5,6,7,8-tetrahydrofolate + NADPH + H(+) = 5-methyluridine(54) in tRNA + (6S)-5,6,7,8-tetrahydrofolate + NADP(+). Catalyzes the folate-dependent formation of 5-methyl-uridine at position 54 (M-5-U54) in all tRNAs. In Desulforamulus reducens (strain ATCC BAA-1160 / DSM 100696 / MI-1) (Desulfotomaculum reducens), this protein is Methylenetetrahydrofolate--tRNA-(uracil-5-)-methyltransferase TrmFO.